Reading from the N-terminus, the 135-residue chain is MAKQQSASAASQRARKKVKKNVADGIAHVHASFNNTIITITDRQGNALSWATSGGQGFKGSRKSTPFAAQVAAEVAGKAAVECGIKNLEVQIKGPGPGRESAVRALNSLGIKITEIQDVTPVPHNGCRPPKRRRI.

It belongs to the universal ribosomal protein uS11 family. As to quaternary structure, part of the 30S ribosomal subunit. Interacts with proteins S7 and S18. Binds to IF-3.

In terms of biological role, located on the platform of the 30S subunit, it bridges several disparate RNA helices of the 16S rRNA. Forms part of the Shine-Dalgarno cleft in the 70S ribosome. The sequence is that of Small ribosomal subunit protein uS11 from Polynucleobacter asymbioticus (strain DSM 18221 / CIP 109841 / QLW-P1DMWA-1) (Polynucleobacter necessarius subsp. asymbioticus).